The primary structure comprises 216 residues: 3-isopropylmalate dehydratase small subunit 2 (216 aa).

It belongs to the LeuD family. LeuD type 1 subfamily. Heterodimer of LeuC and LeuD.

The enzyme catalyses (2R,3S)-3-isopropylmalate = (2S)-2-isopropylmalate. It participates in amino-acid biosynthesis; L-leucine biosynthesis; L-leucine from 3-methyl-2-oxobutanoate: step 2/4. In terms of biological role, catalyzes the isomerization between 2-isopropylmalate and 3-isopropylmalate, via the formation of 2-isopropylmaleate. The polypeptide is 3-isopropylmalate dehydratase small subunit 2 (Bordetella pertussis (strain Tohama I / ATCC BAA-589 / NCTC 13251)).